The following is a 1312-amino-acid chain: MRNNLIYTMFLSCLHFETFCQNTTTSNDDCEALSQDLDNKNPVECCTTEAFDFLDKKYPNWRKVNKYVRSPYINELRFMGCCNKTISTSAILTTTPLTTSSTTLEIYTTDSDSTTAETTSVPTTTTSIQCGVLANTSCCNLKVTECLSKQYEDWRNVTLIKGYERELEKCDCVLTSSSTETGTVKFLDREFFRVFSSAEIASTTSLPTTTSPSLNCYWLSEPSNFSEWIDGKQTNLRYNGGCCSETSIQVLNSSDSTRWILTTSDSWNKANALINLLYCTPNACPQQSMLWTNCSNLSTTTSSSTMLSSTTLLTTETETRESSSTGSTQTTTPSTEPSTTITTPMEQSSTVSSVQKTRTSEDKPSSSTTVPTSASTSESSTSSPMAETSSSSTTSQSSPASTSTVPESSTVGSTPTTGLTTLSTNEQSTSTSSGGHSTSTFGTTSETPETSTDFTATSTSSSSDSSTQSSNAQTSTIENGSTTTNFTSAPSTSSTPATPTTTYNWPTGGTTWMLPSGEIVQAHKTFFSSFNYFQVLSESLIAYPNCTTVLMQLIYNPRTKETRTEITSDAEGCKKTSSTPTPSSTSVHSTTATPSTTPGTTTYNWPTGGTTRMLPSGEIILSESLIAYPNCTTVLMQLIYNPSTKETRTETTTDADGCKKTSSTSSSTPSLKHSTTPTPTPGTTTYNWPTGGTTRMLPSGEIILSESLIAYPNCTTVLMQLIYTPSTNKTRTETTTDTEGCKKTSTISSSSSKFSITPTPTPSSGTTTYNWPTGGTTRTLPSGEIILSESLIAFQNCTTVLMQLIYNPSTNKTRTETTTDAEGCKKTSSTSKISTTPTSPTSSKPTPTSTSMTTTYNWPTGGTTRTLPSGEIILSESLIAYKNCTTVLMQLIYNPSTNKTRTETTTDAQGCKATSSTSLKPTSPSSSTASPPTTTYNWPTGGTTRTLPSGEIILSESLIAYKNCTTVLMQLIYNPSTNKTRTETTTDAQGCKATITTPTPITTTYNWPTGGTTRTLPSGEIILSESLIAYKNCTTVLMQLIYNPSTNKTRTETTSDAQGCKATSTTQTPTTFNWPTGGTTRTLPSGEIILSESLIAYKNCTTVLMQLIYNPSKNTTRTETTSDAEGCKATSSGTTSTMSPGTTGGTTVSRTTNSNNPIDSSTLETTTFAWPTGGTTRMLPSGEIIISESLTAFPNCTTVLKQLVYNPTTNTTRTDTISDSEGCKATSTAKPTTVISSTATCSSLNLNLNSTTRPTSSEIKDSYSVGEKIYHICEKDYSFEIALQPLKIYQCLNGGAWSGTPEKCVATGKSEL.

The first 20 residues, 1–20 (MRNNLIYTMFLSCLHFETFC), serve as a signal peptide directing secretion. Positions 299 to 344 (TTTSSSTMLSSTTLLTTETETRESSSTGSTQTTTPSTEPSTTITTP) are enriched in low complexity. Disordered regions lie at residues 299 to 503 (TTTS…TTTY), 565 to 609 (EITS…PTGG), 645 to 692 (KETR…PTGG), 749 to 775 (SSSS…PTGG), 812 to 864 (KTRT…GGTT), 899 to 942 (KTRT…PTGG), 1048 to 1079 (KTRT…TGGT), and 1114 to 1165 (NTTR…TLET). Polar residues predominate over residues 345 to 357 (MEQSSTVSSVQKT). Over residues 365–503 (SSSTTVPTSA…STPATPTTTY (139 aa)) the composition is skewed to low complexity. Residues 565-574 (EITSDAEGCK) show a composition bias toward basic and acidic residues. Positions 576–609 (TSSTPTPSSTSVHSTTATPSTTPGTTTYNWPTGG) are enriched in low complexity. The span at 645–659 (KETRTETTTDADGCK) shows a compositional bias: basic and acidic residues. A compositionally biased stretch (low complexity) spans 660-692 (KTSSTSSSTPSLKHSTTPTPTPGTTTYNWPTGG). A compositionally biased stretch (basic and acidic residues) spans 813–825 (TRTETTTDAEGCK). A compositionally biased stretch (low complexity) spans 826-864 (KTSSTSKISTTPTSPTSSKPTPTSTSMTTTYNWPTGGTT). Residues 899–908 (KTRTETTTDA) show a composition bias toward polar residues. Residues 914–942 (TSSTSLKPTSPSSSTASPPTTTYNWPTGG) show a composition bias toward low complexity. The segment covering 1048–1057 (KTRTETTSDA) has biased composition (polar residues). The segment covering 1063–1076 (TSTTQTPTTFNWPT) has biased composition (low complexity). The segment covering 1114 to 1123 (NTTRTETTSD) has biased composition (polar residues). The segment covering 1130–1154 (TSSGTTSTMSPGTTGGTTVSRTTNS) has biased composition (low complexity). The segment covering 1155-1164 (NNPIDSSTLE) has biased composition (polar residues). Residues 1239 to 1306 (ATCSSLNLNL…WSGTPEKCVA (68 aa)) enclose the Sushi domain. Disulfide bonds link Cys1241–Cys1291 and Cys1273–Cys1304.

The protein resides in the secreted. This is an uncharacterized protein from Caenorhabditis elegans.